We begin with the raw amino-acid sequence, 264 residues long: 3-methyl-2-oxobutanoate hydroxymethyltransferase (264 aa).

Residues Asp-45 and Asp-84 each contribute to the Mg(2+) site. 3-methyl-2-oxobutanoate is bound by residues 45–46 (DS), Asp-84, and Lys-112. Glu-114 is a binding site for Mg(2+). The Proton acceptor role is filled by Glu-181.

It belongs to the PanB family. As to quaternary structure, homodecamer; pentamer of dimers. Mg(2+) serves as cofactor.

The protein localises to the cytoplasm. The enzyme catalyses 3-methyl-2-oxobutanoate + (6R)-5,10-methylene-5,6,7,8-tetrahydrofolate + H2O = 2-dehydropantoate + (6S)-5,6,7,8-tetrahydrofolate. It participates in cofactor biosynthesis; (R)-pantothenate biosynthesis; (R)-pantoate from 3-methyl-2-oxobutanoate: step 1/2. Functionally, catalyzes the reversible reaction in which hydroxymethyl group from 5,10-methylenetetrahydrofolate is transferred onto alpha-ketoisovalerate to form ketopantoate. In Vibrio campbellii (strain ATCC BAA-1116), this protein is 3-methyl-2-oxobutanoate hydroxymethyltransferase.